Reading from the N-terminus, the 155-residue chain is uncharacterized protein (155 aa).

The N-terminal stretch at 1–19 is a signal peptide; the sequence is MPLSKTLVQKLQQAGMAIA.

This is an uncharacterized protein from Haemophilus influenzae (strain ATCC 51907 / DSM 11121 / KW20 / Rd).